The sequence spans 163 residues: Lipoprotein signal peptidase (163 aa).

3 helical membrane-spanning segments follow: residues 11-31 (ILIAVFVVIFDQVTKYIIATT), 63-83 (KMTFFFIITIIILIALVYFFI), and 88-108 (YNLFMQVAISLLFAGALGNFI). Catalysis depends on residues aspartate 118 and aspartate 136. Residues 131-151 (IFNIADSSLTIGVILIIIALL) traverse the membrane as a helical segment.

Belongs to the peptidase A8 family.

The protein resides in the cell membrane. It carries out the reaction Release of signal peptides from bacterial membrane prolipoproteins. Hydrolyzes -Xaa-Yaa-Zaa-|-(S,diacylglyceryl)Cys-, in which Xaa is hydrophobic (preferably Leu), and Yaa (Ala or Ser) and Zaa (Gly or Ala) have small, neutral side chains.. Its pathway is protein modification; lipoprotein biosynthesis (signal peptide cleavage). This protein specifically catalyzes the removal of signal peptides from prolipoproteins. The chain is Lipoprotein signal peptidase from Staphylococcus aureus.